The chain runs to 529 residues: Phosphoenolpyruvate carboxykinase (ATP) (529 aa).

Positions 60, 195, and 201 each coordinate substrate. Residues lysine 201, histidine 220, and 236–244 (GLSGTGKTT) contribute to the ATP site. Positions 201 and 220 each coordinate Mn(2+). Aspartate 257 serves as a coordination point for Mn(2+). Glutamate 285, arginine 323, and serine 448 together coordinate ATP. Arginine 323 serves as a coordination point for substrate.

Belongs to the phosphoenolpyruvate carboxykinase (ATP) family. Mn(2+) is required as a cofactor.

The protein resides in the cytoplasm. The catalysed reaction is oxaloacetate + ATP = phosphoenolpyruvate + ADP + CO2. It participates in carbohydrate biosynthesis; gluconeogenesis. Functionally, involved in the gluconeogenesis. Catalyzes the conversion of oxaloacetate (OAA) to phosphoenolpyruvate (PEP) through direct phosphoryl transfer between the nucleoside triphosphate and OAA. This Geobacter sp. (strain M21) protein is Phosphoenolpyruvate carboxykinase (ATP).